The primary structure comprises 135 residues: Antennal-specific protein OS-C (135 aa).

Residues 1 to 27 form the signal peptide; the sequence is MGFHMGRQLLLSGFLLVMLQMVTQTQA. Residues 43–84 form a disordered region; sequence VIKREGDDDGDDDDSSSEETVEDSEESRRRRREVNTDNTPSA. Over residues 49–67 the composition is skewed to acidic residues; the sequence is DDDGDDDDSSSEETVEDSE.

As to expression, antenna. In the third antennal segment. Expressed in sencilla coeloconica.

The protein is Antennal-specific protein OS-C (Os-C) of Drosophila melanogaster (Fruit fly).